Consider the following 485-residue polypeptide: MALLVEKTSSGREYKVKDMSQADFGRLEIELAEVEMPGLMSCRAEFGPSQPFKGAKITGSLHMTIQTAVLIETLTALGAEVRWCSCNIFSTQEHAAAAIARDSAAVFAWKGETLQEYWWCTERALDWGPDGGPDLIVDDGGDATLLIHEGVKAEEEYKKNGALPDPSSTDNAEFQIVLTIIRDGLKSDPTKYTRMKERLVGVSEETTTGVKRLYQMQANGTLLFPAINVNDSVTKSKFDNLYGCRHSLPDGLMRATDVMIAGKVAVVAGYGDVGKGCAAALKQAGARVIVTEIDPICALQATMEGLQVLTLEDVVSEADIFVTTTGNKDIIMVDHMRKMKNNAIVCNIGHFDNEIDMLGLETYPGVKRITIKPQTDRWVFPDTNSGIIVLAEGRLMNLGCATGHPSFVMSCSFTNQVIAQLELWNERKTGKYEKKVYVLPKHLDEKVAALHLGKLGAKLTKLTKDQADYISVPIEGPYKPAHYRY.

Substrate is bound by residues T64, D139, and E205. 206–208 (TTT) contacts NAD(+). Substrate-binding residues include K235 and D239. NAD(+)-binding positions include N240, 269 to 274 (GYGDVG), E292, N327, 348 to 350 (IGH), and N397.

The protein belongs to the adenosylhomocysteinase family. As to quaternary structure, homotetramer. Requires NAD(+) as cofactor.

The enzyme catalyses S-adenosyl-L-homocysteine + H2O = L-homocysteine + adenosine. It participates in amino-acid biosynthesis; L-homocysteine biosynthesis; L-homocysteine from S-adenosyl-L-homocysteine: step 1/1. Functionally, adenosylhomocysteine is a competitive inhibitor of S-adenosyl-L-methionine-dependent methyl transferase reactions; therefore adenosylhomocysteinase may play a key role in the control of methylations via regulation of the intracellular concentration of adenosylhomocysteine. This Catharanthus roseus (Madagascar periwinkle) protein is Adenosylhomocysteinase (SAHH).